Here is a 466-residue protein sequence, read N- to C-terminus: Cocosin 1 (466 aa).

An N-terminal signal peptide occupies residues 1–22 (MGSSSLLSFSLCLLLLCHLSQA). 2 disulfides stabilise this stretch: Cys45/Cys78 and Cys121/Cys288. Cupin type-1 domains follow at residues 50–242 (LNAL…ELAR) and 294–443 (QNIG…DEAR).

It belongs to the 11S seed storage protein (globulins) family. Hexamer; each subunit is composed of an acidic and a basic chain derived from a single precursor and linked by a disulfide bond. As to expression, endosperm of the seeds.

Functionally, seed storage protein. The protein is Cocosin 1 of Cocos nucifera (Coconut palm).